Reading from the N-terminus, the 93-residue chain is Bacterial microcompartment shell protein PduA (93 aa).

Residues 5 to 89 (ALGMVETKGL…PHTDVEKILP (85 aa)) form the BMC domain.

The protein belongs to the bacterial microcompartments protein family. In terms of assembly, homohexamer with a central pore; Lys-26 and Arg-79 interactions are very important for hexamer symmetry. The hexamers pack against each other in arrays. Interacts individually with shell proteins PduB, PduB', PduJ, PduK, PduN and PduU. Modeling suggests PduC, PduD, PduE, PduL and PduP interact with a cleft formed by the C-terminal segments of 2 adjacent PduA subunits (on the BMC luminal side) in the hexamer.

It localises to the bacterial microcompartment. It participates in polyol metabolism; 1,2-propanediol degradation. Its function is as follows. One of the major shell proteins of the bacterial microcompartment (BMC) dedicated to 1,2-propanediol (1,2-PD) degradation, probably important for metabolite diffusion into and out of the BMC. Overexpression of a C-terminally mutated form (PduA*) makes thin parallel filaments with a honeycomb-like assembly in cross-section that probably form nanotubes. The filaments interfere with septation. PduA is probably the hub for binding multiple enzymes to the interior of the BMC. At least one of PduA or PduJ is required for BMC assembly; it must be encoded as the first gene in the pdu operon. Functionally, expression of a cosmid containing the full 21-gene pdu operon in E.coli allows E.coli to grow on 1,2-PD with the appearance of BMCs in its cytoplasm. Overexpression of this protein leads to aberrant intracellular filaments. The 1,2-PD-specific bacterial microcompartment (BMC) concentrates low levels of 1,2-PD catabolic enzymes, concentrates volatile reaction intermediates thus enhancing pathway flux and keeps the level of toxic, mutagenic propionaldehyde low. This chain is Bacterial microcompartment shell protein PduA, found in Citrobacter freundii.